The primary structure comprises 216 residues: Octanoyltransferase (216 aa).

The BPL/LPL catalytic domain maps to 33–212; the sequence is AHTPDELWLV…ILSNILGLTA (180 aa). Residues 72 to 79, 139 to 141, and 152 to 154 contribute to the substrate site; these read RGGQVTYH, SLG, and GVA. C170 serves as the catalytic Acyl-thioester intermediate.

This sequence belongs to the LipB family.

It is found in the cytoplasm. The catalysed reaction is octanoyl-[ACP] + L-lysyl-[protein] = N(6)-octanoyl-L-lysyl-[protein] + holo-[ACP] + H(+). It functions in the pathway protein modification; protein lipoylation via endogenous pathway; protein N(6)-(lipoyl)lysine from octanoyl-[acyl-carrier-protein]: step 1/2. In terms of biological role, catalyzes the transfer of endogenously produced octanoic acid from octanoyl-acyl-carrier-protein onto the lipoyl domains of lipoate-dependent enzymes. Lipoyl-ACP can also act as a substrate although octanoyl-ACP is likely to be the physiological substrate. The polypeptide is Octanoyltransferase (Saccharophagus degradans (strain 2-40 / ATCC 43961 / DSM 17024)).